Consider the following 465-residue polypeptide: Ribulose bisphosphate carboxylase large chain (465 aa).

An N6,N6,N6-trimethyllysine modification is found at Lys-4. Asn-113 and Thr-163 together coordinate substrate. Lys-165 (proton acceptor) is an active-site residue. Lys-167 is a binding site for substrate. Mg(2+) is bound by residues Lys-191, Asp-193, and Glu-194. An N6-carboxylysine modification is found at Lys-191. The active-site Proton acceptor is His-284. Residues Arg-285, His-317, and Ser-369 each coordinate substrate.

It belongs to the RuBisCO large chain family. Type I subfamily. As to quaternary structure, heterohexadecamer of 8 large chains and 8 small chains; disulfide-linked. The disulfide link is formed within the large subunit homodimers. The cofactor is Mg(2+). The disulfide bond which can form in the large chain dimeric partners within the hexadecamer appears to be associated with oxidative stress and protein turnover.

The protein resides in the plastid. It is found in the chloroplast. It carries out the reaction 2 (2R)-3-phosphoglycerate + 2 H(+) = D-ribulose 1,5-bisphosphate + CO2 + H2O. The enzyme catalyses D-ribulose 1,5-bisphosphate + O2 = 2-phosphoglycolate + (2R)-3-phosphoglycerate + 2 H(+). RuBisCO catalyzes two reactions: the carboxylation of D-ribulose 1,5-bisphosphate, the primary event in carbon dioxide fixation, as well as the oxidative fragmentation of the pentose substrate in the photorespiration process. Both reactions occur simultaneously and in competition at the same active site. The sequence is that of Ribulose bisphosphate carboxylase large chain from Dillenia indica (Elephant apple).